The sequence spans 157 residues: Transcription elongation factor GreA (157 aa).

This sequence belongs to the GreA/GreB family.

Functionally, necessary for efficient RNA polymerase transcription elongation past template-encoded arresting sites. The arresting sites in DNA have the property of trapping a certain fraction of elongating RNA polymerases that pass through, resulting in locked ternary complexes. Cleavage of the nascent transcript by cleavage factors such as GreA or GreB allows the resumption of elongation from the new 3'terminus. GreA releases sequences of 2 to 3 nucleotides. This Caulobacter sp. (strain K31) protein is Transcription elongation factor GreA.